A 547-amino-acid polypeptide reads, in one-letter code: Probable pectinesterase/pectinesterase inhibitor 12 (547 aa).

A signal peptide spans 1–23 (MALSSFNLSSLLFLLFFTPSVFS). Residues 31-185 (NPHETSATSF…YKHISNSLSA (155 aa)) form a pectinesterase inhibitor 12 region. N-linked (GlcNAc...) asparagine glycosylation is found at asparagine 131, asparagine 247, asparagine 260, and asparagine 303. The pectinesterase 12 stretch occupies residues 237 to 533 (SLVVAADGTG…FTATEFITGD (297 aa)). Substrate contacts are provided by threonine 312 and glutamine 342. Residue aspartate 365 is the Proton donor; for pectinesterase activity of the active site. A disulfide bridge links cysteine 379 with cysteine 399. Aspartate 386 serves as the catalytic Nucleophile; for pectinesterase activity. 2 N-linked (GlcNAc...) asparagine glycosylation sites follow: asparagine 432 and asparagine 443. Arginine 454 and tryptophan 456 together coordinate substrate. An N-linked (GlcNAc...) asparagine glycan is attached at asparagine 523.

It in the N-terminal section; belongs to the PMEI family. This sequence in the C-terminal section; belongs to the pectinesterase family. In terms of tissue distribution, expressed in siliques.

Its subcellular location is the secreted. The protein resides in the cell wall. The enzyme catalyses [(1-&gt;4)-alpha-D-galacturonosyl methyl ester](n) + n H2O = [(1-&gt;4)-alpha-D-galacturonosyl](n) + n methanol + n H(+). Its pathway is glycan metabolism; pectin degradation; 2-dehydro-3-deoxy-D-gluconate from pectin: step 1/5. Functionally, acts in the modification of cell walls via demethylesterification of cell wall pectin. This is Probable pectinesterase/pectinesterase inhibitor 12 (PME12) from Arabidopsis thaliana (Mouse-ear cress).